Reading from the N-terminus, the 32-residue chain is U5-ctenitoxin-Pn1a (32 aa).

3 disulfide bridges follow: C3/C16, C9/C21, and C15/C30.

Expressed by the venom gland.

The protein localises to the secreted. Functionally, blocks voltage-gated sodium channels (Nav). Causes tail erection, scratching and a reduction in mobility at a dose level of 1.40 mg/mouse. The polypeptide is U5-ctenitoxin-Pn1a (Phoneutria nigriventer (Brazilian armed spider)).